The primary structure comprises 168 residues: uncharacterized protein (168 aa).

The helical transmembrane segment at 23–47 (LFARASIIGVALLLSACATVPMASV) threads the bilayer.

The protein localises to the membrane. This is an uncharacterized protein from Haemophilus influenzae (strain ATCC 51907 / DSM 11121 / KW20 / Rd).